The primary structure comprises 454 residues: Bifunctional protein GlmU (454 aa).

The interval 1–230 (MSGRFAVILA…LSETMGVNDR (230 aa)) is pyrophosphorylase. Residues 9–12 (LAAG), K23, Q73, and 78–79 (GT) contribute to the UDP-N-acetyl-alpha-D-glucosamine site. Mg(2+) is bound at residue D103. The UDP-N-acetyl-alpha-D-glucosamine site is built by G140, E155, N170, and N228. Mg(2+) is bound at residue N228. The interval 231-251 (VALSQAEAAMRKRINEEWMRQ) is linker. The N-acetyltransferase stretch occupies residues 252–454 (GVTIIDPQTT…NKDNYVKKDV (203 aa)). Residues R333 and K351 each contribute to the UDP-N-acetyl-alpha-D-glucosamine site. Residue H363 is the Proton acceptor of the active site. UDP-N-acetyl-alpha-D-glucosamine contacts are provided by Y366 and N377. Acetyl-CoA is bound by residues 386-387 (NY), S405, A423, and R440.

The protein in the N-terminal section; belongs to the N-acetylglucosamine-1-phosphate uridyltransferase family. In the C-terminal section; belongs to the transferase hexapeptide repeat family. In terms of assembly, homotrimer. Mg(2+) serves as cofactor.

It localises to the cytoplasm. It catalyses the reaction alpha-D-glucosamine 1-phosphate + acetyl-CoA = N-acetyl-alpha-D-glucosamine 1-phosphate + CoA + H(+). The enzyme catalyses N-acetyl-alpha-D-glucosamine 1-phosphate + UTP + H(+) = UDP-N-acetyl-alpha-D-glucosamine + diphosphate. The protein operates within nucleotide-sugar biosynthesis; UDP-N-acetyl-alpha-D-glucosamine biosynthesis; N-acetyl-alpha-D-glucosamine 1-phosphate from alpha-D-glucosamine 6-phosphate (route II): step 2/2. It participates in nucleotide-sugar biosynthesis; UDP-N-acetyl-alpha-D-glucosamine biosynthesis; UDP-N-acetyl-alpha-D-glucosamine from N-acetyl-alpha-D-glucosamine 1-phosphate: step 1/1. Its pathway is bacterial outer membrane biogenesis; LPS lipid A biosynthesis. In terms of biological role, catalyzes the last two sequential reactions in the de novo biosynthetic pathway for UDP-N-acetylglucosamine (UDP-GlcNAc). The C-terminal domain catalyzes the transfer of acetyl group from acetyl coenzyme A to glucosamine-1-phosphate (GlcN-1-P) to produce N-acetylglucosamine-1-phosphate (GlcNAc-1-P), which is converted into UDP-GlcNAc by the transfer of uridine 5-monophosphate (from uridine 5-triphosphate), a reaction catalyzed by the N-terminal domain. This Shouchella clausii (strain KSM-K16) (Alkalihalobacillus clausii) protein is Bifunctional protein GlmU.